The primary structure comprises 337 residues: Phosphoribosylformylglycinamidine cyclo-ligase (337 aa).

It belongs to the AIR synthase family.

Its subcellular location is the cytoplasm. The enzyme catalyses 2-formamido-N(1)-(5-O-phospho-beta-D-ribosyl)acetamidine + ATP = 5-amino-1-(5-phospho-beta-D-ribosyl)imidazole + ADP + phosphate + H(+). The protein operates within purine metabolism; IMP biosynthesis via de novo pathway; 5-amino-1-(5-phospho-D-ribosyl)imidazole from N(2)-formyl-N(1)-(5-phospho-D-ribosyl)glycinamide: step 2/2. The protein is Phosphoribosylformylglycinamidine cyclo-ligase of Gloeobacter violaceus (strain ATCC 29082 / PCC 7421).